Consider the following 257-residue polypeptide: NH(3)-dependent NAD(+) synthetase (257 aa).

An ATP-binding site is contributed by Gly28 to Ser35. Asp34 contacts Mg(2+). Residue Arg109 participates in deamido-NAD(+) binding. ATP is bound at residue Thr129. Glu134 contributes to the Mg(2+) binding site. Residues Lys142 and Asp149 each coordinate deamido-NAD(+). 2 residues coordinate ATP: Lys158 and Ser180. His240 to Lys241 is a deamido-NAD(+) binding site.

Belongs to the NAD synthetase family. Homodimer.

The enzyme catalyses deamido-NAD(+) + NH4(+) + ATP = AMP + diphosphate + NAD(+) + H(+). It functions in the pathway cofactor biosynthesis; NAD(+) biosynthesis; NAD(+) from deamido-NAD(+) (ammonia route): step 1/1. Functionally, catalyzes the ATP-dependent amidation of deamido-NAD to form NAD. Uses ammonia as a nitrogen source. This is NH(3)-dependent NAD(+) synthetase from Pyrococcus horikoshii (strain ATCC 700860 / DSM 12428 / JCM 9974 / NBRC 100139 / OT-3).